The sequence spans 312 residues: Malate dehydrogenase (312 aa).

NAD(+) contacts are provided by residues 7–13 (GAAGGIG) and D34. The substrate site is built by R81 and R87. NAD(+) is bound by residues N94 and 117 to 119 (ITN). 2 residues coordinate substrate: N119 and R153. Residue H177 is the Proton acceptor of the active site. M227 contacts NAD(+).

The protein belongs to the LDH/MDH superfamily. MDH type 1 family. In terms of assembly, homodimer.

It carries out the reaction (S)-malate + NAD(+) = oxaloacetate + NADH + H(+). In terms of biological role, catalyzes the reversible oxidation of malate to oxaloacetate. The polypeptide is Malate dehydrogenase (Cronobacter sakazakii (strain ATCC BAA-894) (Enterobacter sakazakii)).